The primary structure comprises 277 residues: Probable enoyl-CoA hydratase, mitochondrial (277 aa).

The transit peptide at methionine 1–proline 42 directs the protein to the mitochondrion. Substrate is bound by residues alanine 85–lysine 88 and glycine 128.

This sequence belongs to the enoyl-CoA hydratase/isomerase family. In terms of assembly, homohexamer; dimer of trimers.

It is found in the mitochondrion matrix. It catalyses the reaction a (3S)-3-hydroxyacyl-CoA = a (2E)-enoyl-CoA + H2O. The enzyme catalyses a 4-saturated-(3S)-3-hydroxyacyl-CoA = a (3E)-enoyl-CoA + H2O. It carries out the reaction (3S)-3-hydroxybutanoyl-CoA = (2E)-butenoyl-CoA + H2O. The catalysed reaction is 3-hydroxyisovaleryl-CoA = 3-methylbut-2-enoyl-CoA + H2O. It catalyses the reaction 3-hydroxypropanoyl-CoA = acryloyl-CoA + H2O. The enzyme catalyses 3-hydroxybutanoyl-CoA = (2E)-butenoyl-CoA + H2O. The protein operates within lipid metabolism; fatty acid beta-oxidation. In terms of biological role, straight-chain enoyl-CoA thioesters from C4 up to at least C16 are processed, although with decreasing catalytic rate. This Dictyostelium discoideum (Social amoeba) protein is Probable enoyl-CoA hydratase, mitochondrial (echs1).